Here is a 142-residue protein sequence, read N- to C-terminus: MKTFTAKPETVKRDWYVVDADGKTLGRLATEIARRLRGKHKAEYTPHVDTGDYIIVLNAEKVAVTGHKRTDKVYYRHTGHVGGIKQATFEEMIARSPERVIEIAVKGMLPKGPLGRAMYRKLKVYAGAEHNHAAQQPQVLDI.

This sequence belongs to the universal ribosomal protein uL13 family. Part of the 50S ribosomal subunit.

Its function is as follows. This protein is one of the early assembly proteins of the 50S ribosomal subunit, although it is not seen to bind rRNA by itself. It is important during the early stages of 50S assembly. The polypeptide is Large ribosomal subunit protein uL13 (Proteus mirabilis (strain HI4320)).